The sequence spans 196 residues: Large ribosomal subunit protein bL25 (196 aa).

It belongs to the bacterial ribosomal protein bL25 family. CTC subfamily. Part of the 50S ribosomal subunit; part of the 5S rRNA/L5/L18/L25 subcomplex. Contacts the 5S rRNA. Binds to the 5S rRNA independently of L5 and L18.

Its function is as follows. This is one of the proteins that binds to the 5S RNA in the ribosome where it forms part of the central protuberance. The protein is Large ribosomal subunit protein bL25 of Amoebophilus asiaticus (strain 5a2).